Here is a 316-residue protein sequence, read N- to C-terminus: ATP synthase gamma chain (316 aa).

The protein belongs to the ATPase gamma chain family. As to quaternary structure, F-type ATPases have 2 components, CF(1) - the catalytic core - and CF(0) - the membrane proton channel. CF(1) has five subunits: alpha(3), beta(3), gamma(1), delta(1), epsilon(1). CF(0) has three main subunits: a, b and c.

It localises to the cellular thylakoid membrane. Produces ATP from ADP in the presence of a proton gradient across the membrane. The gamma chain is believed to be important in regulating ATPase activity and the flow of protons through the CF(0) complex. The polypeptide is ATP synthase gamma chain (Synechococcus sp. (strain CC9605)).